We begin with the raw amino-acid sequence, 201 residues long: Phospholipase A2 inhibitor NAI (201 aa).

The first 19 residues, 1–19 (MKSLQIICLLFVLVARGSC), serve as a signal peptide directing secretion. 8 cysteine pairs are disulfide-bonded: C22–C47, C25–C32, C40–C68, C74–C95, C96–C101, C119–C144, C137–C166, and C170–C191. The N-linked (GlcNAc...) asparagine glycan is linked to N176.

This sequence belongs to the CNF-like-inhibitor family. Heterotrimer of 2 subunits A and 1 subunit B; non-covalently linked. N-glycosylated, probably by biantennary structure. Glycosylation does not change PLA2 inhibitory activity. In terms of tissue distribution, expressed by the liver.

It is found in the secreted. Functionally, inhibits the enzymatic activity of all phospholipase A2 tested, binding them with micromole to nanomole affinity. In Notechis ater (Black tiger snake), this protein is Phospholipase A2 inhibitor NAI.